The primary structure comprises 333 residues: Ketol-acid reductoisomerase (NADP(+)) (333 aa).

In terms of domain architecture, KARI N-terminal Rossmann spans 1–181 (MKVYYDQDAD…GGARSGVIET (181 aa)). NADP(+) is bound by residues 24 to 27 (YGSQ), arginine 47, and 82 to 85 (DEVQ). Histidine 107 is an active-site residue. Glycine 133 is a binding site for NADP(+). The region spanning 182 to 327 (TFREETETDL…KELRSMMPWL (146 aa)) is the KARI C-terminal knotted domain. Mg(2+) is bound by residues aspartate 190, glutamate 194, glutamate 226, and glutamate 230. Residue serine 251 participates in substrate binding.

This sequence belongs to the ketol-acid reductoisomerase family. It depends on Mg(2+) as a cofactor.

The enzyme catalyses (2R)-2,3-dihydroxy-3-methylbutanoate + NADP(+) = (2S)-2-acetolactate + NADPH + H(+). It catalyses the reaction (2R,3R)-2,3-dihydroxy-3-methylpentanoate + NADP(+) = (S)-2-ethyl-2-hydroxy-3-oxobutanoate + NADPH + H(+). It functions in the pathway amino-acid biosynthesis; L-isoleucine biosynthesis; L-isoleucine from 2-oxobutanoate: step 2/4. Its pathway is amino-acid biosynthesis; L-valine biosynthesis; L-valine from pyruvate: step 2/4. In terms of biological role, involved in the biosynthesis of branched-chain amino acids (BCAA). Catalyzes an alkyl-migration followed by a ketol-acid reduction of (S)-2-acetolactate (S2AL) to yield (R)-2,3-dihydroxy-isovalerate. In the isomerase reaction, S2AL is rearranged via a Mg-dependent methyl migration to produce 3-hydroxy-3-methyl-2-ketobutyrate (HMKB). In the reductase reaction, this 2-ketoacid undergoes a metal-dependent reduction by NADPH to yield (R)-2,3-dihydroxy-isovalerate. This Desulfovibrio desulfuricans (strain ATCC 27774 / DSM 6949 / MB) protein is Ketol-acid reductoisomerase (NADP(+)).